The following is a 482-amino-acid chain: L-propargylglycine--L-glutamate ligase (482 aa).

The catalysed reaction is L-propargylglycine + L-glutamate + ATP = L-gamma-glutamyl-L-propargylglycine + ADP + phosphate + H(+). It participates in amino-acid metabolism. Its pathway is antibiotic biosynthesis. In terms of biological role, involved in the biosynthesis of terminal alkyne-containing amino acids such as L-beta-ethynylserine, that are produced as antibiotics by S.cattleya. Catalyzes the ATP-dependent ligation of L-propargylglycine to L-glutamate to form the dipeptide L-gamma-glutamyl-L-propargylglycine. Is selective for L-propargylglycine over norvaline, allylglycine and the standard proteinogenic amino acids, except L-cysteine which can be used as a substrate to a lesser extent. In Streptantibioticus cattleyicolor (strain ATCC 35852 / DSM 46488 / JCM 4925 / NBRC 14057 / NRRL 8057) (Streptomyces cattleya), this protein is L-propargylglycine--L-glutamate ligase.